A 339-amino-acid polypeptide reads, in one-letter code: DNA repair protein RAD51 homolog 1 (339 aa).

The segment at 1 to 23 (MAMQVQFEASTDTSAEEESFGPE) is disordered. In terms of domain architecture, HhH spans 48–77 (TVESVAHAPKKELLNIKGISEAKADKILAE). 127–134 (GEFRTGKT) serves as a coordination point for ATP.

This sequence belongs to the RecA family. RAD51 subfamily. Forms linear homooligomers, giving rise to a RAD51 nucleoprotein filament, which is essential for strand-pairing reactions during DNA recombination. Expressed at high levels in lymphoid and reproductive organs.

Its subcellular location is the nucleus. The protein localises to the cytoplasm. The protein resides in the chromosome. Plays an important role in homologous strand exchange, a key step in DNA repair through homologous recombination (HR). Binds to single-stranded DNA in an ATP-dependent manner to form nucleoprotein filaments which are essential for the homology search and strand exchange. Catalyzes the recognition of homology and strand exchange between homologous DNA partners to form a joint molecule between a processed DNA break and the repair template. Recruited to resolve stalled replication forks during replication stress. Also involved in interstrand cross-link repair. The protein is DNA repair protein RAD51 homolog 1 (RAD51A) of Gallus gallus (Chicken).